A 197-amino-acid chain; its full sequence is Putative sulfur carrier protein aq_1421 (197 aa).

C17 (cysteine persulfide intermediate) is an active-site residue.

The protein belongs to the sulfur carrier protein TusA family.

This Aquifex aeolicus (strain VF5) protein is Putative sulfur carrier protein aq_1421.